The following is a 108-amino-acid chain: T-cell acute lymphocytic leukemia protein 2 (108 aa).

In terms of domain architecture, bHLH spans 2 to 54; that stretch reads TRKIFTNTRERWRQQNVNSAFAKLRKLIPTHPPDKKLSKNETLRLAMRYINFL. Residues 89–108 form a disordered region; that stretch reads DRTLLENYQVPSPGPSHHIP.

In Homo sapiens (Human), this protein is T-cell acute lymphocytic leukemia protein 2 (TAL2).